Consider the following 379-residue polypeptide: tRNA (guanine(26)-N(2))-dimethyltransferase (379 aa).

The Trm1 methyltransferase domain occupies 4-375 (VEVLEGKAKI…APYEVFVNVL (372 aa)). Positions 36, 61, 78, 120, and 121 each coordinate S-adenosyl-L-methionine.

It belongs to the class I-like SAM-binding methyltransferase superfamily. Trm1 family.

It catalyses the reaction guanosine(26) in tRNA + 2 S-adenosyl-L-methionine = N(2)-dimethylguanosine(26) in tRNA + 2 S-adenosyl-L-homocysteine + 2 H(+). In terms of biological role, dimethylates a single guanine residue at position 26 of a number of tRNAs using S-adenosyl-L-methionine as donor of the methyl groups. This is tRNA (guanine(26)-N(2))-dimethyltransferase from Pyrococcus abyssi (strain GE5 / Orsay).